Consider the following 279-residue polypeptide: MTARMEQRFADVAAEGRPVLVTYFMGGDPDFDTSLAIMKALRQAGADIIELGVPFSDPMADGPAIQLAGQRALKAGQSLAKTLELARLFRAEDQRTPIVLMGYYNPIYIYGVERFLADALEAGVDGLIVVDLPPEMDDELCIPALEKGISFIRLATPTTDDRRLPKVLENTSGFVYYVSMTGITGSALPDPSLIAGAVARIKAHTPLPVCVGFGVKTADHARAIGASADGVVVGTAIVNQIASSLTEEGRATEATVPGVEALVRGLAAGVRAARLAAAE.

Active-site proton acceptor residues include glutamate 50 and aspartate 61.

It belongs to the TrpA family. As to quaternary structure, tetramer of two alpha and two beta chains.

It catalyses the reaction (1S,2R)-1-C-(indol-3-yl)glycerol 3-phosphate + L-serine = D-glyceraldehyde 3-phosphate + L-tryptophan + H2O. The protein operates within amino-acid biosynthesis; L-tryptophan biosynthesis; L-tryptophan from chorismate: step 5/5. Functionally, the alpha subunit is responsible for the aldol cleavage of indoleglycerol phosphate to indole and glyceraldehyde 3-phosphate. The sequence is that of Tryptophan synthase alpha chain from Rhizobium meliloti (strain 1021) (Ensifer meliloti).